Consider the following 72-residue polypeptide: Translation initiation factor IF-1 (72 aa).

The 72-residue stretch at 1–72 folds into the S1-like domain; it reads MAGNDVIEIE…TKGRITYRHK (72 aa).

The protein belongs to the IF-1 family. As to quaternary structure, component of the 30S ribosomal translation pre-initiation complex which assembles on the 30S ribosome in the order IF-2 and IF-3, IF-1 and N-formylmethionyl-tRNA(fMet); mRNA recruitment can occur at any time during PIC assembly.

It is found in the cytoplasm. Its function is as follows. One of the essential components for the initiation of protein synthesis. Stabilizes the binding of IF-2 and IF-3 on the 30S subunit to which N-formylmethionyl-tRNA(fMet) subsequently binds. Helps modulate mRNA selection, yielding the 30S pre-initiation complex (PIC). Upon addition of the 50S ribosomal subunit IF-1, IF-2 and IF-3 are released leaving the mature 70S translation initiation complex. This Oenococcus oeni (strain ATCC BAA-331 / PSU-1) protein is Translation initiation factor IF-1.